The chain runs to 116 residues: Large ribosomal subunit protein bL17 (116 aa).

The protein belongs to the bacterial ribosomal protein bL17 family. As to quaternary structure, part of the 50S ribosomal subunit. Contacts protein L32.

The polypeptide is Large ribosomal subunit protein bL17 (Synechococcus sp. (strain RCC307)).